The primary structure comprises 1040 residues: DNA cross-link repair 1A protein (1040 aa).

The interval 1 to 190 is nuclear localization region; sequence MLEDISEEDI…RAGDHPFSSP (190 aa). The tract at residues 15–76 is disordered; the sequence is SKRKPKRVDP…LGNAGCQTSV (62 aa). Residues 53 to 65 show a composition bias toward basic and acidic residues; it reads RAAEAKEVKDHEV. Residues 119-149 form a UBZ4-type zinc finger; that stretch reads DGYCPNCQMPFSSLIGQTPRWHVFECLDSPP. Positions 122, 125, 140, and 144 each coordinate Zn(2+). Glycyl lysine isopeptide (Lys-Gly) (interchain with G-Cter in SUMO2) cross-links involve residues lysine 202, lysine 236, lysine 269, lysine 353, lysine 361, lysine 429, lysine 488, lysine 508, lysine 517, lysine 533, and lysine 536. Residues 396–614 are nuclear focus formation; the sequence is LPYDLACTGG…KSLSDLEFDA (219 aa). Disordered regions lie at residues 582–602 and 623–651; these read GINL…CKRK and SVEL…ACQK. Serine 590 bears the Phosphoserine mark. Glycyl lysine isopeptide (Lys-Gly) (interchain with G-Cter in SUMO2) cross-links involve residues lysine 668, lysine 670, and lysine 674.

Belongs to the DNA repair metallo-beta-lactamase (DRMBL) family. As to quaternary structure, binds constitutively to TP53BP1. Binds CDC27, which is itself a component of the anaphase promoting complex (APC). Binds PIAS1. Expressed in brain, heart, kidney, liver, pancreas, placenta and skeletal muscle.

The protein resides in the nucleus. It catalyses the reaction a beta-lactam + H2O = a substituted beta-amino acid. Its activity is regulated as follows. Beta-lactamase activity is inhibited by sulbactam. In terms of biological role, may be required for DNA interstrand cross-link repair. Also required for checkpoint mediated cell cycle arrest in early prophase in response to mitotic spindle poisons. Possesses beta-lactamase activity, catalyzing the hydrolysis of penicillin G and nitrocefin. Exhibits no activity towards other beta-lactam antibiotic classes including cephalosporins (cefotaxime) and carbapenems (imipenem). This chain is DNA cross-link repair 1A protein (DCLRE1A), found in Homo sapiens (Human).